The sequence spans 61 residues: Small ribosomal subunit protein bS21 (61 aa).

This sequence belongs to the bacterial ribosomal protein bS21 family.

The protein is Small ribosomal subunit protein bS21 of Leuconostoc mesenteroides subsp. mesenteroides (strain ATCC 8293 / DSM 20343 / BCRC 11652 / CCM 1803 / JCM 6124 / NCDO 523 / NBRC 100496 / NCIMB 8023 / NCTC 12954 / NRRL B-1118 / 37Y).